Consider the following 212-residue polypeptide: B3 domain-containing protein Os04g0386900 (212 aa).

The interval 1 to 78 (MRAATALPSI…PRPPEPEPEK (78 aa)) is disordered. 2 stretches are compositionally biased toward low complexity: residues 8–23 (PSIP…ASDP) and 36–46 (DAGAEDPAAVD). A DNA-binding region (TF-B3) is located at residues 93 to 191 (FTCIMCKSHV…EFRVQVLRAE (99 aa)).

The protein resides in the nucleus. The sequence is that of B3 domain-containing protein Os04g0386900 from Oryza sativa subsp. japonica (Rice).